Consider the following 274-residue polypeptide: Nitrogenase iron protein (274 aa).

ATP is bound at residue 8-15 (GKGGIGKS). Cys94 contacts [4Fe-4S] cluster. Position 97 is an ADP-ribosylarginine; by dinitrogenase reductase ADP-ribosyltransferase (Arg97). Cys131 serves as a coordination point for [4Fe-4S] cluster.

It belongs to the NifH/BchL/ChlL family. Homodimer. [4Fe-4S] cluster is required as a cofactor. Post-translationally, the reversible ADP-ribosylation of Arg-97 inactivates the nitrogenase reductase and regulates nitrogenase activity.

The catalysed reaction is N2 + 8 reduced [2Fe-2S]-[ferredoxin] + 16 ATP + 16 H2O = H2 + 8 oxidized [2Fe-2S]-[ferredoxin] + 2 NH4(+) + 16 ADP + 16 phosphate + 6 H(+). The key enzymatic reactions in nitrogen fixation are catalyzed by the nitrogenase complex, which has 2 components: the iron protein and the molybdenum-iron protein. This Prosthecochloris aestuarii (strain DSM 271 / SK 413) protein is Nitrogenase iron protein.